We begin with the raw amino-acid sequence, 419 residues long: MRTKIIAIIPARSGSKGLRNKNALMLIDKPLLAYTIEAALQSEMFEKVIVTTDSEQYGAIAESYGADFLLRPEELATDKASSFEFIKHALSIYTDYESFALLQPTSPFRDSTHIIEAVKLYQTLEKYQCVVSVTRSNKPSQIIRPLDDYSTLSFFDLDYSKYNRNSIVEYHPNGAIFIANKQHYLHTKHFFGRYSLAYIMDKESSLDIDDRMDFELAITIQQKKNRQKIDLYQNIHNRINEKRNEFDSVSDITLIGHSLFDYWDVKKINDIEVNNLGIAGINSKEYYEYIIEKELIVNFGEFVFIFFGTNDIVVSDWKKEDTLWYLKKTCQYIKKKNAASKIYLLSVPPVFGRIDRDNRIINDLNSYLRENVDFAKFISLDHVLKDSYGNLNKMYTYDGLHFNSNGYTVLENEIAEIVK.

It belongs to the CMP-NeuNAc synthase family. As to quaternary structure, monomer. May form aggregates. The cofactor is Mg(2+). Mn(2+) is required as a cofactor.

The protein resides in the cytoplasm. It carries out the reaction an N-acylneuraminate + CTP = a CMP-N-acyl-beta-neuraminate + diphosphate. Inhibited by the CTP analogs 5-mercuri-CTP and CTP-2',3'-dialdehyde. Catalyzes the formation of CMP-N-acetylneuraminic acid (CMP-NeuNAc), which is essential for the formation of the capsule. The polypeptide is N-acylneuraminate cytidylyltransferase (neuA) (Escherichia coli O18:K1:H7 (strain RS218 / NMEC)).